The primary structure comprises 241 residues: uncharacterized protein (241 aa).

Disordered stretches follow at residues 19-59 (ERDR…QQLG), 101-139 (VRRP…ASRS), and 152-182 (RGCR…KPCS). Positions 34–48 (ARGGRGLWTVGGGGS) are enriched in gly residues. Residues 49–58 (PTETAESQQL) show a composition bias toward polar residues. Pro residues predominate over residues 106 to 118 (PSVPSPLPKPPVP).

This is an uncharacterized protein from Homo sapiens (Human).